The sequence spans 228 residues: 5'-methylthioadenosine/S-adenosylhomocysteine nucleosidase (228 aa).

Glu11 acts as the Proton acceptor in catalysis. Substrate contacts are provided by residues Gly77, Ile151, and 172–173 (ME). Asp196 acts as the Proton donor in catalysis.

This sequence belongs to the PNP/UDP phosphorylase family. MtnN subfamily.

The catalysed reaction is S-adenosyl-L-homocysteine + H2O = S-(5-deoxy-D-ribos-5-yl)-L-homocysteine + adenine. It carries out the reaction S-methyl-5'-thioadenosine + H2O = 5-(methylsulfanyl)-D-ribose + adenine. The enzyme catalyses 5'-deoxyadenosine + H2O = 5-deoxy-D-ribose + adenine. It functions in the pathway amino-acid biosynthesis; L-methionine biosynthesis via salvage pathway; S-methyl-5-thio-alpha-D-ribose 1-phosphate from S-methyl-5'-thioadenosine (hydrolase route): step 1/2. Its function is as follows. Catalyzes the irreversible cleavage of the glycosidic bond in both 5'-methylthioadenosine (MTA) and S-adenosylhomocysteine (SAH/AdoHcy) to adenine and the corresponding thioribose, 5'-methylthioribose and S-ribosylhomocysteine, respectively. Also cleaves 5'-deoxyadenosine, a toxic by-product of radical S-adenosylmethionine (SAM) enzymes, into 5-deoxyribose and adenine. The polypeptide is 5'-methylthioadenosine/S-adenosylhomocysteine nucleosidase (Staphylococcus aureus (strain MRSA252)).